The chain runs to 410 residues: Mating-type locus allele B4 protein (410 aa).

The variable domain between B alleles stretch occupies residues 1–110 (MSSDPKISIT…ANASSPVVGC (110 aa)). A DNA-binding region (homeobox; TALE-type) is located at residues 107-184 (VVGCRELSED…NARRRSGWSH (78 aa)). The highly conserved between B alleles stretch occupies residues 111–410 (RELSEDLPAY…PFLCLSVAFV (300 aa)). 3 disordered regions span residues 202 to 241 (RAKL…TPAD), 278 to 335 (TPKP…TPEL), and 375 to 394 (RGNR…QPDE). A compositionally biased stretch (low complexity) spans 206–222 (SSSNQSTPPSPTSEYPS). Residues 276–308 (KKTPKPGMPRPVTTVAKRQPARKTKPAAKPKSR) carry the Nuclear localization signal motif. Residues 294–307 (QPARKTKPAAKPKS) are compositionally biased toward basic residues. The segment covering 312 to 335 (PRASTTPSIDSTLDSSKLESTPEL) has biased composition (polar residues). Residues 333-410 (PELSMCSTAD…PFLCLSVAFV (78 aa)) form a not essential for B4 function region. Over residues 375–388 (RGNRKVKALPKRAG) the composition is skewed to basic residues.

The protein belongs to the TALE/M-ATYP homeobox family.

It localises to the nucleus. In terms of biological role, the B locus has at least 25 alleles, and any combination of two different B alleles yields a multimeric regulatory protein, that activates genes responsible for the pathogenicity and for the sexual development of the fungus within the corn plant. The protein is Mating-type locus allele B4 protein of Mycosarcoma maydis (Corn smut fungus).